The chain runs to 444 residues: Glutamate-1-semialdehyde 2,1-aminomutase (444 aa).

An N6-(pyridoxal phosphate)lysine modification is found at lysine 267.

This sequence belongs to the class-III pyridoxal-phosphate-dependent aminotransferase family. HemL subfamily. In terms of assembly, homodimer. Pyridoxal 5'-phosphate serves as cofactor.

The protein resides in the cytoplasm. The catalysed reaction is (S)-4-amino-5-oxopentanoate = 5-aminolevulinate. It participates in porphyrin-containing compound metabolism; protoporphyrin-IX biosynthesis; 5-aminolevulinate from L-glutamyl-tRNA(Glu): step 2/2. The polypeptide is Glutamate-1-semialdehyde 2,1-aminomutase (Xylella fastidiosa (strain Temecula1 / ATCC 700964)).